Reading from the N-terminus, the 272-residue chain is Shikimate dehydrogenase (NADP(+)) (272 aa).

Shikimate-binding positions include 14-16 and T61; that span reads SKS. The active-site Proton acceptor is the K65. NADP(+) is bound at residue E77. 2 residues coordinate shikimate: N86 and D102. NADP(+)-binding positions include 126 to 130, 149 to 154, and M213; these read GAGGA and NRTASR. Y215 lines the shikimate pocket. G237 contacts NADP(+).

This sequence belongs to the shikimate dehydrogenase family. In terms of assembly, homodimer.

It carries out the reaction shikimate + NADP(+) = 3-dehydroshikimate + NADPH + H(+). It participates in metabolic intermediate biosynthesis; chorismate biosynthesis; chorismate from D-erythrose 4-phosphate and phosphoenolpyruvate: step 4/7. Involved in the biosynthesis of the chorismate, which leads to the biosynthesis of aromatic amino acids. Catalyzes the reversible NADPH linked reduction of 3-dehydroshikimate (DHSA) to yield shikimate (SA). In Salmonella typhimurium (strain LT2 / SGSC1412 / ATCC 700720), this protein is Shikimate dehydrogenase (NADP(+)).